The sequence spans 673 residues: UvrABC system protein B (673 aa).

Residues 25-413 (EGIESGLAHQ…GSDIAEQVVR (389 aa)) enclose the Helicase ATP-binding domain. 38 to 45 (GVTGSGKT) is a binding site for ATP. The short motif at 91–114 (YYDYYQPEAYVPTTDTFIEKDASV) is the Beta-hairpin element. The region spanning 430–583 (QVDDLLSEIN…QHQYNLDNNI (154 aa)) is the Helicase C-terminal domain. Residues 634-669 (DTKIVELEKLMQGHAQNLEFEQAAAMRDKIAKLRIQ) form the UVR domain.

Belongs to the UvrB family. In terms of assembly, forms a heterotetramer with UvrA during the search for lesions. Interacts with UvrC in an incision complex.

The protein localises to the cytoplasm. The UvrABC repair system catalyzes the recognition and processing of DNA lesions. A damage recognition complex composed of 2 UvrA and 2 UvrB subunits scans DNA for abnormalities. Upon binding of the UvrA(2)B(2) complex to a putative damaged site, the DNA wraps around one UvrB monomer. DNA wrap is dependent on ATP binding by UvrB and probably causes local melting of the DNA helix, facilitating insertion of UvrB beta-hairpin between the DNA strands. Then UvrB probes one DNA strand for the presence of a lesion. If a lesion is found the UvrA subunits dissociate and the UvrB-DNA preincision complex is formed. This complex is subsequently bound by UvrC and the second UvrB is released. If no lesion is found, the DNA wraps around the other UvrB subunit that will check the other stand for damage. This chain is UvrABC system protein B, found in Colwellia psychrerythraea (strain 34H / ATCC BAA-681) (Vibrio psychroerythus).